A 314-amino-acid chain; its full sequence is Acetaldehyde dehydrogenase 3 (314 aa).

The active-site Acyl-thioester intermediate is the cysteine 132. NAD(+) contacts are provided by residues 163-171 (SAGPGTRAN) and asparagine 291.

Belongs to the acetaldehyde dehydrogenase family.

It carries out the reaction acetaldehyde + NAD(+) + CoA = acetyl-CoA + NADH + H(+). In Dechloromonas aromatica (strain RCB), this protein is Acetaldehyde dehydrogenase 3.